The sequence spans 222 residues: Glutathione S-transferase A5 (222 aa).

Position 2 is an N-acetylalanine (Ala2). The GST N-terminal domain maps to 3-83 (EKPKLHYSNA…YIASKYNLYG (81 aa)). Lys4 carries the post-translational modification N6-succinyllysine. Glutathione is bound by residues Tyr9, Arg45, 54–55 (QV), and 67–68 (QT). The GST C-terminal domain occupies 85 to 208 (DMKERALIDM…QPGSQRKPPM (124 aa)).

The protein belongs to the GST superfamily. Alpha family. As to quaternary structure, homodimer. As to expression, expression not detected.

The protein localises to the cytoplasm. It catalyses the reaction RX + glutathione = an S-substituted glutathione + a halide anion + H(+). This chain is Glutathione S-transferase A5 (GSTA5), found in Homo sapiens (Human).